Consider the following 447-residue polypeptide: Phosphoglucosamine mutase (447 aa).

The active-site Phosphoserine intermediate is serine 104. The Mg(2+) site is built by serine 104, aspartate 243, aspartate 245, and aspartate 247. Position 104 is a phosphoserine (serine 104).

The protein belongs to the phosphohexose mutase family. Mg(2+) is required as a cofactor. Post-translationally, activated by phosphorylation.

The catalysed reaction is alpha-D-glucosamine 1-phosphate = D-glucosamine 6-phosphate. In terms of biological role, catalyzes the conversion of glucosamine-6-phosphate to glucosamine-1-phosphate. This chain is Phosphoglucosamine mutase, found in Corynebacterium glutamicum (strain ATCC 13032 / DSM 20300 / JCM 1318 / BCRC 11384 / CCUG 27702 / LMG 3730 / NBRC 12168 / NCIMB 10025 / NRRL B-2784 / 534).